The sequence spans 223 residues: MARKPLLHYFNGRGRMESIRWLLAAAGEEFDEKFMETAEDLDKLRNDGSLMYQQVPMVEIDGMKLVQTRAILNYVANKHNLYGKDMKERALIDMYTEGVADLYELVLLLPLCPPEQKDAKVDFIKEKIRTRYFPAFEKVLKSHGQDYLVGNRLSKADILLVELLYNVEELDPSAIASFPLLKALKTRISSLPTVKKFLQPGSQRKPPMDEKNLEKAKKIFKIP.

Methionine 1 is modified (N-acetylmethionine). At alanine 2 the chain carries N-acetylalanine; in Glutathione S-transferase alpha I, N-terminally processed. A GST N-terminal domain is found at 3 to 83 (RKPLLHYFNG…YVANKHNLYG (81 aa)). Lysine 4 carries the post-translational modification N6-succinyllysine. Residues tyrosine 9, arginine 45, 54–55 (QV), and 67–68 (QT) each bind glutathione. The GST C-terminal domain occupies 85–208 (DMKERALIDM…QPGSQRKPPM (124 aa)).

The protein belongs to the GST superfamily. Alpha family. As to quaternary structure, homodimer or heterodimer of GSTA1 and GSTA2. In terms of tissue distribution, liver and lung.

It is found in the cytoplasm. The catalysed reaction is RX + glutathione = an S-substituted glutathione + a halide anion + H(+). It carries out the reaction prostaglandin A2 + glutathione = prostaglandin A2-S-(R)-glutathione. It catalyses the reaction prostaglandin J2 + glutathione = prostaglandin J2-S-(R)-glutathione. The enzyme catalyses (13S)-hydroperoxy-(9Z,11E)-octadecadienoate + 2 glutathione = (13S)-hydroxy-(9Z,11E)-octadecadienoate + glutathione disulfide + H2O. The catalysed reaction is androst-5-ene-3,17-dione = androst-4-ene-3,17-dione. Functionally, glutathione S-transferase that catalyzes the nucleophilic attack of the sulfur atom of glutathione on the electrophilic groups of a wide range of exogenous and endogenous compounds. Involved in the formation of glutathione conjugates of both prostaglandin A2 (PGA2) and prostaglandin J2 (PGJ2). It also catalyzes the isomerization of D5-androstene-3,17-dione (AD) into D4-androstene-3,17-dione and may therefore play an important role in hormone biosynthesis. Through its glutathione-dependent peroxidase activity toward the fatty acid hydroperoxide (13S)-hydroperoxy-(9Z,11E)-octadecadienoate/13-HPODE it is also involved in the metabolism of oxidized linoleic acid. In Oryctolagus cuniculus (Rabbit), this protein is Glutathione S-transferase alpha I.